Here is a 266-residue protein sequence, read N- to C-terminus: Nickel import ATP-binding protein NikE (266 aa).

An ABC transporter domain is found at 4–252 (ISADNIVKIY…RHPASRLLRE (249 aa)). 45-52 (GRSGCGKS) lines the ATP pocket.

The protein belongs to the ABC transporter superfamily. Nickel importer (TC 3.A.1.5.3) family. The complex is composed of two ATP-binding proteins (NikD and NikE), two transmembrane proteins (NikB and NikC) and a solute-binding protein (NikA).

The protein localises to the cell inner membrane. It catalyses the reaction Ni(2+)(out) + ATP + H2O = Ni(2+)(in) + ADP + phosphate + H(+). Part of the ABC transporter complex NikABCDE involved in nickel import. Responsible for energy coupling to the transport system. The polypeptide is Nickel import ATP-binding protein NikE (Brucella suis biovar 1 (strain 1330)).